Reading from the N-terminus, the 365-residue chain is MPTYNIVVFGGDHCGPEVTAEALKVLDVIDNSNADVHFNIQPHLLGGASIDAHGEPLTDEALAAAKAADAVILGAIGGPKWGTGKVRPEQGILRLRKEMGTYGNLRPCFFASESLVKTSPLKEEVCRGVNFNIVRELTGGIYFGERTEDDGSGYAVDTEPYSRAEIERVARLAGFLALAEDPPCPVWSLDKANVMATSRLWRKTVTDVFANEFPQLKIGHHLIDSAAMLMVKNPRALNGVIVTSNLFGDIISDEASVIPGSLGLLPSASLTASPDGKSKCNGIYEPIHGSAPDISGKGIVNPVAMILSLGMMCKYSLQQPELAKKIDEAVRNVIEKGINTADIGGSAKTAEVGDAIAKELEALLK.

Position 78-89 (78-89 (GPKWGTGKVRPE)) interacts with NAD(+). Residues Arg-96, Arg-106, Arg-135, and Asp-224 each coordinate substrate. Residues Asp-224, Asp-249, and Asp-253 each contribute to the Mg(2+) site. Residue 289–301 (GSAPDISGKGIVN) participates in NAD(+) binding.

It belongs to the isocitrate and isopropylmalate dehydrogenases family. Homodimer. Requires Mg(2+) as cofactor. It depends on Mn(2+) as a cofactor.

It is found in the cytoplasm. The catalysed reaction is (2R,3S)-3-isopropylmalate + NAD(+) = 4-methyl-2-oxopentanoate + CO2 + NADH. It participates in amino-acid biosynthesis; L-leucine biosynthesis; L-leucine from 3-methyl-2-oxobutanoate: step 3/4. Functionally, catalyzes the oxidation of 3-carboxy-2-hydroxy-4-methylpentanoate (3-isopropylmalate) to 3-carboxy-4-methyl-2-oxopentanoate. The product decarboxylates to 4-methyl-2 oxopentanoate. This is 3-isopropylmalate dehydrogenase (LEUC) from Zymoseptoria tritici (Speckled leaf blotch fungus).